A 120-amino-acid chain; its full sequence is Ribonuclease P protein component (120 aa).

Belongs to the RnpA family. In terms of assembly, consists of a catalytic RNA component (M1 or rnpB) and a protein subunit.

The catalysed reaction is Endonucleolytic cleavage of RNA, removing 5'-extranucleotides from tRNA precursor.. RNaseP catalyzes the removal of the 5'-leader sequence from pre-tRNA to produce the mature 5'-terminus. It can also cleave other RNA substrates such as 4.5S RNA. The protein component plays an auxiliary but essential role in vivo by binding to the 5'-leader sequence and broadening the substrate specificity of the ribozyme. The polypeptide is Ribonuclease P protein component (Dehalococcoides mccartyi (strain CBDB1)).